The chain runs to 85 residues: MLRGYRAVFSPFYGDVCRYYPSCSAYTLQAVQEHGVIFGGYLGVCRILRCHPWAAGGVDDVPLRGKRRYRMTAFGFVVATSQGKA.

Belongs to the UPF0161 family.

The protein resides in the cell membrane. In terms of biological role, could be involved in insertion of integral membrane proteins into the membrane. In Leifsonia xyli subsp. xyli (strain CTCB07), this protein is Putative membrane protein insertion efficiency factor.